We begin with the raw amino-acid sequence, 243 residues long: Cell division protein ZipA (243 aa).

Over 1–4 the chain is Periplasmic; that stretch reads MSDV. A helical membrane pass occupies residues 5 to 25; it reads TLLRIGIAIVGILFVAAVFFF. Residues 26-243 are Cytoplasmic-facing; that stretch reads STPKTSAHRV…VPPLIKNSRW (218 aa). The interval 32–89 is disordered; sequence AHRVRTKKEEPPRERREPMLSTEVDNSPHQSVDEVPASVPQQQVNPEATKPGEIELGK. Residues 38–49 show a composition bias toward basic and acidic residues; that stretch reads KKEEPPRERREP.

This sequence belongs to the ZipA family. As to quaternary structure, interacts with FtsZ via their C-terminal domains.

It is found in the cell inner membrane. Functionally, essential cell division protein that stabilizes the FtsZ protofilaments by cross-linking them and that serves as a cytoplasmic membrane anchor for the Z ring. Also required for the recruitment to the septal ring of downstream cell division proteins. The protein is Cell division protein ZipA of Xylella fastidiosa (strain Temecula1 / ATCC 700964).